We begin with the raw amino-acid sequence, 24 residues long: MAWTKPAYTDLRIGFEVTMYFASR.

The segment at residues 16–20 (EVTMY) is a cross-link (pyrroloquinoline quinone (Glu-Tyr)).

It belongs to the PqqA family.

It participates in cofactor biosynthesis; pyrroloquinoline quinone biosynthesis. Its function is as follows. Required for coenzyme pyrroloquinoline quinone (PQQ) biosynthesis. PQQ is probably formed by cross-linking a specific glutamate to a specific tyrosine residue and excising these residues from the peptide. This chain is Coenzyme PQQ synthesis protein A, found in Pseudomonas fluorescens (strain Pf0-1).